Reading from the N-terminus, the 519-residue chain is Nitrogen fixation regulatory protein (519 aa).

The region spanning 23-93 (LPEIFRQTVE…QALWGRLAQK (71 aa)) is the PAS 1 domain. Positions 94-148 (KPWSGVLVNRRKDKTLYLAELTVAPVLNEAGETIYYLGMHRDTSELHELEQRVNN) constitute a PAC domain. The PAS 2 domain maps to 151–217 (LMIEAVVNAA…FETLENQGSA (67 aa)). One can recognise a Histidine kinase domain in the interval 302-517 (AAIHRLQGPV…RIVVELPFSA (216 aa)). H305 is modified (phosphohistidine; by autocatalysis).

The cofactor is FAD.

It catalyses the reaction ATP + protein L-histidine = ADP + protein N-phospho-L-histidine.. Functionally, required for the inhibition of NifA activity in response to oxygen and low level of fixed nitrogen. In Azotobacter vinelandii, this protein is Nitrogen fixation regulatory protein (nifL).